We begin with the raw amino-acid sequence, 542 residues long: ATP synthase subunit alpha (542 aa).

173–180 provides a ligand contact to ATP; the sequence is GDRQTGKT. Positions 518-542 are disordered; that stretch reads PLVEKKPDEKHTTPVEQEKIVAGEK. Residues 519-542 are compositionally biased toward basic and acidic residues; it reads LVEKKPDEKHTTPVEQEKIVAGEK.

The protein belongs to the ATPase alpha/beta chains family. In terms of assembly, F-type ATPases have 2 components, CF(1) - the catalytic core - and CF(0) - the membrane proton channel. CF(1) has five subunits: alpha(3), beta(3), gamma(1), delta(1), epsilon(1). CF(0) has three main subunits: a(1), b(2) and c(9-12). The alpha and beta chains form an alternating ring which encloses part of the gamma chain. CF(1) is attached to CF(0) by a central stalk formed by the gamma and epsilon chains, while a peripheral stalk is formed by the delta and b chains.

The protein resides in the cell membrane. The enzyme catalyses ATP + H2O + 4 H(+)(in) = ADP + phosphate + 5 H(+)(out). Functionally, produces ATP from ADP in the presence of a proton gradient across the membrane. The alpha chain is a regulatory subunit. This Bifidobacterium adolescentis (strain ATCC 15703 / DSM 20083 / NCTC 11814 / E194a) protein is ATP synthase subunit alpha.